Reading from the N-terminus, the 276-residue chain is Rhomboid protease GlpG (276 aa).

6 helical membrane-spanning segments follow: residues 94–114 (GPVT…MQIL), 142–162 (ALMH…WYLG), 169–189 (LGSG…GYVQ), 192–212 (FSGP…GYVW), 229–249 (LIIF…GMSM), and 250–270 (ANGA…VDSL). Ser-201 serves as the catalytic Nucleophile. The active site involves His-254.

It belongs to the peptidase S54 family.

It localises to the cell inner membrane. It catalyses the reaction Cleaves type-1 transmembrane domains using a catalytic dyad composed of serine and histidine that are contributed by different transmembrane domains.. Rhomboid-type serine protease that catalyzes intramembrane proteolysis. The sequence is that of Rhomboid protease GlpG from Escherichia coli O45:K1 (strain S88 / ExPEC).